Here is a 314-residue protein sequence, read N- to C-terminus: Nucleoprotein (314 aa).

Met-1 is subject to N-acetylmethionine; by host. RNA contacts are provided by Tyr-38, Tyr-41, Arg-118, Lys-237, and Ser-266.

Belongs to the tenuiviruses nucleocapsid protein family.

It is found in the virion. The protein resides in the host cytoplasm. Functionally, encapsidates the genome, protecting it from nucleases. The encapsidated genomic RNA is termed the nucleocapsid (NC), and serves as template for viral transcription and replication. The sequence is that of Nucleoprotein from Wheat yellow head virus (WYHV).